The following is a 333-amino-acid chain: Holliday junction branch migration complex subunit RuvB (333 aa).

The large ATPase domain (RuvB-L) stretch occupies residues 4-185; the sequence is IDRLVSTDVL…FGIVQRLEFY (182 aa). Residues I24, R25, G66, K69, T70, T71, 132 to 134, R175, Y185, and R222 contribute to the ATP site; that span reads EDY. T70 is a Mg(2+) binding site. The small ATPAse domain (RuvB-S) stretch occupies residues 186–256; it reads SVPDLEHIVS…IAIKALEMLN (71 aa). The segment at 259–333 is head domain (RuvB-H); it reads KEGLDYMDSK…HAYQHFICGG (75 aa). R295, R314, and R319 together coordinate DNA.

Belongs to the RuvB family. In terms of assembly, homohexamer. Forms an RuvA(8)-RuvB(12)-Holliday junction (HJ) complex. HJ DNA is sandwiched between 2 RuvA tetramers; dsDNA enters through RuvA and exits via RuvB. An RuvB hexamer assembles on each DNA strand where it exits the tetramer. Each RuvB hexamer is contacted by two RuvA subunits (via domain III) on 2 adjacent RuvB subunits; this complex drives branch migration. In the full resolvosome a probable DNA-RuvA(4)-RuvB(12)-RuvC(2) complex forms which resolves the HJ.

The protein resides in the cytoplasm. The enzyme catalyses ATP + H2O = ADP + phosphate + H(+). Its function is as follows. The RuvA-RuvB-RuvC complex processes Holliday junction (HJ) DNA during genetic recombination and DNA repair, while the RuvA-RuvB complex plays an important role in the rescue of blocked DNA replication forks via replication fork reversal (RFR). RuvA specifically binds to HJ cruciform DNA, conferring on it an open structure. The RuvB hexamer acts as an ATP-dependent pump, pulling dsDNA into and through the RuvAB complex. RuvB forms 2 homohexamers on either side of HJ DNA bound by 1 or 2 RuvA tetramers; 4 subunits per hexamer contact DNA at a time. Coordinated motions by a converter formed by DNA-disengaged RuvB subunits stimulates ATP hydrolysis and nucleotide exchange. Immobilization of the converter enables RuvB to convert the ATP-contained energy into a lever motion, pulling 2 nucleotides of DNA out of the RuvA tetramer per ATP hydrolyzed, thus driving DNA branch migration. The RuvB motors rotate together with the DNA substrate, which together with the progressing nucleotide cycle form the mechanistic basis for DNA recombination by continuous HJ branch migration. Branch migration allows RuvC to scan DNA until it finds its consensus sequence, where it cleaves and resolves cruciform DNA. This is Holliday junction branch migration complex subunit RuvB from Hamiltonella defensa subsp. Acyrthosiphon pisum (strain 5AT).